Here is a 37-residue protein sequence, read N- to C-terminus: Delta-amaurobitoxin-Pl1a (37 aa).

4 disulfides stabilise this stretch: Cys2-Cys18, Cys9-Cys23, Cys17-Cys33, and Cys25-Cys31. A Serine amide modification is found at Ser37.

The protein belongs to the neurotoxin 07 (Beta/delta-agtx) family. 02 (aga-3) subfamily. In terms of tissue distribution, expressed by the venom gland.

The protein resides in the secreted. Functionally, binds at site 4 of sodium channels (Nav) and inhibits the fast inactivation of cockroach channels. This toxin is active only on insects. Has a potent activity against S.litura larvae. This chain is Delta-amaurobitoxin-Pl1a, found in Pireneitega luctuosa (Tangled nest spider).